Consider the following 133-residue polypeptide: Thioredoxin-2, mitochondrial (133 aa).

Residues 1-29 constitute a mitochondrion transit peptide; it reads MRGFIANSLKPHMRSFALRRSFTSSRILR. Residues 30–133 form the Thioredoxin domain; sequence KVNAVESFGD…LSSLLAKYQE (104 aa). Residues Cys59 and Cys62 each act as nucleophile in the active site. Cysteines 59 and 62 form a disulfide.

Belongs to the thioredoxin family. As to quaternary structure, interacts with arg3.

It is found in the mitochondrion. Disulfide reductase which serves multiple functions in mitochondria, protecting mitochondrial components against thiol-oxidative damage as a thiol-disulfide oxidoreductase, and supporting urea cycle and respiration in mitochondria in a manner independent of active site thiols. The chain is Thioredoxin-2, mitochondrial (trx2) from Schizosaccharomyces pombe (strain 972 / ATCC 24843) (Fission yeast).